Here is a 78-residue protein sequence, read N- to C-terminus: Large ribosomal subunit protein bL28 (78 aa).

It belongs to the bacterial ribosomal protein bL28 family.

The sequence is that of Large ribosomal subunit protein bL28 from Parasynechococcus marenigrum (strain WH8102).